We begin with the raw amino-acid sequence, 1210 residues long: Epidermal growth factor receptor (1210 aa).

The N-terminal stretch at 1 to 24 (MRPSGTAGAALLALLAALCPASRA) is a signal peptide. The Extracellular segment spans residues 25–645 (LEEKKVCQGT…CPTNGPKIPS (621 aa)). C31 and C58 are disulfide-bonded. A glycan (N-linked (GlcNAc...) (complex) asparagine; atypical; partial) is linked at N56. N73 carries N-linked (GlcNAc...) asparagine; atypical glycosylation. The stretch at 75–300 (DLSFLKTIQE…CVKKCPRNYV (226 aa)) is one Approximate repeat. N128, N175, and N196 each carry an N-linked (GlcNAc...) asparagine glycan. 13 disulfide bridges follow: C157-C187, C190-C199, C194-C207, C215-C223, C219-C231, C232-C240, C236-C248, C251-C260, C264-C291, C295-C307, C311-C326, C329-C333, and C337-C362. Phosphoserine is present on S229. 4 N-linked (GlcNAc...) asparagine glycosylation sites follow: N352, N361, N413, and N444. The Approximate repeat unit spans residues 390-600 (QELDILKTVK…CVKTCPAGVM (211 aa)). 11 disulfide bridges follow: C470–C499, C506–C515, C510–C523, C526–C535, C539–C555, C558–C571, C562–C579, C582–C591, C595–C617, C620–C628, and C624–C636. N528 carries an N-linked (GlcNAc...) asparagine glycan. An N-linked (GlcNAc...) asparagine; partial glycan is attached at N568. N-linked (GlcNAc...) asparagine; partial glycosylation is present at N603. A glycan (N-linked (GlcNAc...) (high mannose) asparagine) is linked at N623. Residues 646–668 (IATGMVGALLLLLVVALGIGLFM) form a helical membrane-spanning segment. The Cytoplasmic portion of the chain corresponds to 669 to 1210 (RRRHIVRKRT…APQSSEFIGA (542 aa)). A Phosphothreonine; by PKC and PKD/PRKD1 modification is found at T678. An important for dimerization, phosphorylation and activation region spans residues 688 to 704 (LVEPLTPSGEAPNQALL). Residue T693 is modified to Phosphothreonine; by PKD/PRKD1. S695 bears the Phosphoserine mark. One can recognise a Protein kinase domain in the interval 712 to 979 (FKKIKVLGSG…KMARDPQRYL (268 aa)). K716 is covalently cross-linked (Glycyl lysine isopeptide (Lys-Gly) (interchain with G-Cter in ubiquitin)). ATP is bound at residue 718–726 (LGSGAFGTV). K737 is covalently cross-linked (Glycyl lysine isopeptide (Lys-Gly) (interchain with G-Cter in ubiquitin)). Position 745 (K745) interacts with ATP. An N6-(2-hydroxyisobutyryl)lysine modification is found at K745. Residues K754 and K757 each participate in a glycyl lysine isopeptide (Lys-Gly) (interchain with G-Cter in ubiquitin) cross-link. Position 790–791 (790–791 (TQ)) interacts with ATP. The active-site Proton acceptor is the D837. D855 contacts ATP. A Glycyl lysine isopeptide (Lys-Gly) (interchain with G-Cter in ubiquitin) cross-link involves residue K867. At Y869 the chain carries Phosphotyrosine. Glycyl lysine isopeptide (Lys-Gly) (interchain with G-Cter in ubiquitin) cross-links involve residues K929, K960, and K970. Phosphoserine is present on residues S991 and S995. 2 positions are modified to phosphotyrosine; by autocatalysis: Y998 and Y1016. Phosphoserine occurs at positions 1026 and 1039. The residue at position 1041 (T1041) is a Phosphothreonine. S1042 is modified (phosphoserine). C1049 is lipidated: S-palmitoyl cysteine. Residue S1064 is modified to Phosphoserine. Y1069 is modified (phosphotyrosine). Phosphoserine occurs at positions 1070, 1071, and 1081. Y1092 and Y1110 each carry phosphotyrosine; by autocatalysis. The interval 1097-1137 (VPKRPAGSVQNPVYHNQPLNPAPSRDPHYQDPHSTAVGNPE) is disordered. Composition is skewed to polar residues over residues 1104–1115 (SVQNPVYHNQPL) and 1128–1137 (PHSTAVGNPE). The S-palmitoyl cysteine moiety is linked to residue C1146. Position 1166 is a phosphoserine (S1166). Residues Y1172 and Y1197 each carry the phosphotyrosine; by autocatalysis modification. R1199 carries the post-translational modification Omega-N-methylarginine.

This sequence belongs to the protein kinase superfamily. Tyr protein kinase family. EGF receptor subfamily. Binding of the ligand triggers homo- and/or heterodimerization of the receptor triggering its autophosphorylation. Heterodimer with ERBB2. Forms a complex with CCDC88A/GIV (via SH2-like regions) and GNAI3 which leads to enhanced EGFR signaling and triggering of cell migration; binding to CCDC88A requires autophosphorylation of the EGFR C-terminal region, and ligand stimulation is required for recruitment of GNAI3 to the complex. Interacts with ERRFI1; inhibits dimerization of the kinase domain and autophosphorylation. Part of a complex with ERBB2 and either PIK3C2A or PIK3C2B. Interacts with GRB2; an adapter protein coupling the receptor to downstream signaling pathways. Interacts with GAB2; involved in signaling downstream of EGFR. Interacts with STAT3; mediates EGFR downstream signaling in cell proliferation. Interacts with RIPK1; involved in NF-kappa-B activation. Interacts (autophosphorylated) with CBL, CBLB and CBLC; involved in EGFR ubiquitination and regulation; interaction with CBL is reduced in the presence of tensin TNS4. Interacts with SOCS5; regulates EGFR degradation through ELOC- and ELOB-mediated ubiquitination and proteasomal degradation. Interacts with PRMT5; methylates EGFR and enhances interaction with PTPN6. Interacts (phosphorylated) with PTPN6; inhibits EGFR-dependent activation of MAPK/ERK. Interacts with COPG1; essential for regulation of EGF-dependent nuclear transport of EGFR by retrograde trafficking from the Golgi to the ER. Interacts with TNK2; this interaction is dependent on EGF stimulation and kinase activity of EGFR. Interacts with PCNA; positively regulates PCNA. Interacts with PELP1. Interacts with MUC1. Interacts with AP2M1. Interacts with FER. May interact with EPS8; mediates EPS8 phosphorylation. Interacts (via SH2 domains) with GRB2, NCK1 and NCK2. Interacts with ATXN2. Interacts with GAREM1. Interacts (ubiquitinated) with ANKRD13A/B/D; the interaction is direct and may regulate EGFR internalization after EGF stimulation. Interacts with GPER1; the interaction occurs in an estrogen-dependent manner. Interacts (via C-terminal cytoplasmic kinase domain) with ZPR1 (via zinc fingers). Interacts with RNF115 and RNF126. Interacts with GPRC5A (via its transmembrane domain). Interacts with FAM83B; positively regulates EGFR inducing its autophosphorylation in absence of stimulation by EGF. Interacts with LAPTM4B; positively correlates with EGFR activation. Interacts with STX19. Interacts with CD44. Interacts with PGRMC1; the interaction requires PGRMC1 homodimerization. Interacts with PIKFYVE. Interacts with NEU3. Interacts with TRAF4. Interacts with the ant venom OMEGA-myrmeciitoxin(02)-Mg1a. Interacts with CD82; this interaction facilitates ligand-induced endocytosis of the receptor and its subsequent desensitization. Post-translationally, phosphorylated on Tyr residues in response to EGF. Phosphorylation at Ser-695 is partial and occurs only if Thr-693 is phosphorylated. Phosphorylation at Thr-678 and Thr-693 by PRKD1 inhibits EGF-induced MAPK8/JNK1 activation. Dephosphorylation by PTPRJ prevents endocytosis and stabilizes the receptor at the plasma membrane. Autophosphorylation at Tyr-1197 is stimulated by methylation at Arg-1199 and enhances interaction with PTPN6. Autophosphorylation at Tyr-1092 and/or Tyr-1110 recruits STAT3. Dephosphorylated by PTPN1 and PTPN2. In terms of processing, monoubiquitinated and polyubiquitinated upon EGF stimulation; which does not affect tyrosine kinase activity or signaling capacity but may play a role in lysosomal targeting. Polyubiquitin linkage is mainly through 'Lys-63', but linkage through 'Lys-48', 'Lys-11' and 'Lys-29' also occurs. Deubiquitination by OTUD7B prevents degradation. Ubiquitinated by RNF115 and RNF126. Ubiquitinated by ZNRF1 or CBL at different lysines in response to EGF stimulation; leading to recruitment of the ESCRT machinery and subsequent degradation in the lysosomes. Deubiquitinated by UCHL1 leading to the inhibition of its degradation. Palmitoylated on Cys residues by ZDHHC20. Palmitoylation inhibits internalization after ligand binding, and increases the persistence of tyrosine-phosphorylated EGFR at the cell membrane. Palmitoylation increases the amplitude and duration of EGFR signaling. Post-translationally, methylated. Methylation at Arg-1199 by PRMT5 stimulates phosphorylation at Tyr-1197. In terms of tissue distribution, ubiquitously expressed. Isoform 2 is also expressed in ovarian cancers.

The protein resides in the cell membrane. Its subcellular location is the endoplasmic reticulum membrane. It localises to the golgi apparatus membrane. The protein localises to the nucleus membrane. It is found in the endosome. The protein resides in the endosome membrane. Its subcellular location is the nucleus. It localises to the secreted. It catalyses the reaction L-tyrosyl-[protein] + ATP = O-phospho-L-tyrosyl-[protein] + ADP + H(+). Its activity is regulated as follows. Endocytosis and inhibition of the activated EGFR by phosphatases like PTPRJ and PTPRK constitute immediate regulatory mechanisms. Upon EGF-binding phosphorylates EPS15 that regulates EGFR endocytosis and activity. Moreover, inducible feedback inhibitors including LRIG1, SOCS4, SOCS5 and ERRFI1 constitute alternative regulatory mechanisms for the EGFR signaling. Up-regulated by NEU3-mediated desialylation of N-linked glycan at Asn-528. Its function is as follows. Receptor tyrosine kinase binding ligands of the EGF family and activating several signaling cascades to convert extracellular cues into appropriate cellular responses. Known ligands include EGF, TGFA/TGF-alpha, AREG, epigen/EPGN, BTC/betacellulin, epiregulin/EREG and HBEGF/heparin-binding EGF. Ligand binding triggers receptor homo- and/or heterodimerization and autophosphorylation on key cytoplasmic residues. The phosphorylated receptor recruits adapter proteins like GRB2 which in turn activates complex downstream signaling cascades. Activates at least 4 major downstream signaling cascades including the RAS-RAF-MEK-ERK, PI3 kinase-AKT, PLCgamma-PKC and STATs modules. May also activate the NF-kappa-B signaling cascade. Also directly phosphorylates other proteins like RGS16, activating its GTPase activity and probably coupling the EGF receptor signaling to the G protein-coupled receptor signaling. Also phosphorylates MUC1 and increases its interaction with SRC and CTNNB1/beta-catenin. Positively regulates cell migration via interaction with CCDC88A/GIV which retains EGFR at the cell membrane following ligand stimulation, promoting EGFR signaling which triggers cell migration. Plays a role in enhancing learning and memory performance. Plays a role in mammalian pain signaling (long-lasting hypersensitivity). Functionally, isoform 2 may act as an antagonist of EGF action. In terms of biological role, (Microbial infection) Acts as a receptor for hepatitis C virus (HCV) in hepatocytes and facilitates its cell entry. Mediates HCV entry by promoting the formation of the CD81-CLDN1 receptor complexes that are essential for HCV entry and by enhancing membrane fusion of cells expressing HCV envelope glycoproteins. This is Epidermal growth factor receptor from Homo sapiens (Human).